Reading from the N-terminus, the 385-residue chain is Probable caffeine synthase 4 (385 aa).

Residues tyrosine 18, cysteine 62, asparagine 67, aspartate 101, leucine 102, serine 140, and phenylalanine 141 each coordinate S-adenosyl-L-homocysteine. Positions 158, 161, and 162 each coordinate caffeine. Residue asparagine 179 participates in Mg(2+) binding. Caffeine is bound at residue threonine 238. Residues aspartate 261, phenylalanine 263, and asparagine 264 each coordinate Mg(2+). Tyrosine 369 provides a ligand contact to caffeine.

Belongs to the methyltransferase superfamily. Type-7 methyltransferase family. Mg(2+) is required as a cofactor. In terms of tissue distribution, expressed in roots, stems, young and old leaves.

It functions in the pathway alkaloid biosynthesis. In terms of biological role, may be involved in the biosynthesis of caffeine. The chain is Probable caffeine synthase 4 from Coffea arabica (Arabian coffee).